The chain runs to 362 residues: tRNA-specific 2-thiouridylase MnmA 1 (362 aa).

Residues 29-36 (AMSGGVDS) and M55 each bind ATP. C109 serves as the catalytic Nucleophile. The cysteines at positions 109 and 201 are disulfide-linked. ATP is bound at residue G133. The interval 151–153 (KDQ) is interaction with tRNA. The active-site Cysteine persulfide intermediate is C201.

It belongs to the MnmA/TRMU family.

Its subcellular location is the cytoplasm. It carries out the reaction S-sulfanyl-L-cysteinyl-[protein] + uridine(34) in tRNA + AH2 + ATP = 2-thiouridine(34) in tRNA + L-cysteinyl-[protein] + A + AMP + diphosphate + H(+). Catalyzes the 2-thiolation of uridine at the wobble position (U34) of tRNA, leading to the formation of s(2)U34. The sequence is that of tRNA-specific 2-thiouridylase MnmA 1 from Fusobacterium nucleatum subsp. nucleatum (strain ATCC 25586 / DSM 15643 / BCRC 10681 / CIP 101130 / JCM 8532 / KCTC 2640 / LMG 13131 / VPI 4355).